Here is a 506-residue protein sequence, read N- to C-terminus: Plant intracellular Ras-group-related LRR protein 1 (506 aa).

Residues 24 to 48 (TAKSSSSSDVEPPPSKSDPSSSSNH) form a disordered region. The stretch at 143 to 193 (KSILKLNELHESYEKLLKEAEERLVRIYESAEKNAAAVAEEEAAEVEVNEE) forms a coiled coil. 10 LRR repeats span residues 203–225 (ENPL…AFGK), 226–249 (IQGL…IAGL), 251–272 (NLLE…IGLL), 273–295 (SKLK…ICHC), 297–319 (SLVV…GFEL), 320–342 (VKLE…IGEM), 344–364 (SLRY…SFGL), 365–389 (LTNL…SFGD), 390–412 (LISL…AFGT), and 414–436 (VNLT…VVKQ). Positions 437 to 449 (GVDAVKMYMGKRW) match the GVYW motif.

It belongs to the SHOC2 family. As to expression, widely expressed.

Leucine-rich repeat protein that likely mediates protein interactions, possibly in the context of signal transduction. PIRL1 acts redundantly with PIRL9 in the differentiation of microspores into pollen. This chain is Plant intracellular Ras-group-related LRR protein 1 (PIRL1), found in Arabidopsis thaliana (Mouse-ear cress).